The following is a 339-amino-acid chain: MKSILIEKPNQLAIVEREIPTPSAGEVRVKVKLAGICGSDSHIYRGHNPFAKYPRVIGHEFFGVIDAVGEGVESARVGERVAVDPVVSCGHCYPCSIGKPNVCTTLAVLGVHADGGFSEYAVVPAKNAWKIPEAVADQYAVMIEPFTIAANVTGHGQPTENDTVLVYGAGPIGLTIVQVLKGVYNVKNVIVADRIDERLEKAKESGADWAINNSQTPLGEIFTEKGIKPTLIIDAACHPSILKEAVTLASPAARIVLMGFSSEPSEVIQQGITGKELSIFSSRLNANKFPIVIDWLSKGLIKPEKLITHTFDFQHVADAISLFEQDQKHCCKVLLTFSE.

Zn(2+) contacts are provided by cysteine 37, histidine 59, cysteine 89, cysteine 92, cysteine 95, cysteine 103, and glutamate 144.

Belongs to the zinc-containing alcohol dehydrogenase family. Requires Zn(2+) as cofactor.

In terms of biological role, not known; probable catabolic enzyme. The chain is Starvation-sensing protein RspB from Escherichia coli (strain K12).